Reading from the N-terminus, the 810-residue chain is Volume-regulated anion channel subunit LRRC8A (810 aa).

Residue Met1 is modified to N-acetylmethionine. Over Met1–Pro22 the chain is Cytoplasmic. The chain crosses the membrane as a helical span at residues Trp23–Val47. Topologically, residues Thr48–Lys123 are extracellular. Intrachain disulfides connect Cys54–Cys310, Cys57–Cys65, and Cys113–Cys295. Residues Asn66 and Asn83 are each glycosylated (N-linked (GlcNAc...) asparagine). A helical membrane pass occupies residues Tyr124–Phe142. The Cytoplasmic portion of the chain corresponds to Trp143–Tyr264. Thr200 carries the post-translational modification Phosphothreonine. Residue Ser202 is modified to Phosphoserine. Thr215 is modified (phosphothreonine). The residue at position 217 (Ser217) is a Phosphoserine. A helical transmembrane segment spans residues Met265 to Val286. At His287–Thr316 the chain is on the extracellular side. Residues Leu317–Trp341 traverse the membrane as a helical segment. Topologically, residues Trp342–Ala810 are cytoplasmic. LRR repeat units lie at residues Glu399 to Lys422, Asn423 to Leu445, Glu447 to Leu468, Thr469 to Arg492, Glu493 to Leu515, Leu518 to Glu542, Leu543 to Val565, Val567 to Lys589, Met590 to Leu613, His614 to His637, His639 to Leu661, Thr662 to Cys684, Lys686 to Leu707, Gln708 to Cys730, Lys732 to Leu753, Thr754 to Cys776, and Leu778 to Arg801. A Di-leucine motif motif is present at residues Leu706 to Leu707.

It belongs to the LRRC8 family. In terms of assembly, heterohexamer; oligomerizes with other LRRC8 proteins (LRRC8B, LRRC8C, LRRC8D and/or LRRC8E) to form a heterohexamer. Can form homohexamers in vitro, but these have lower conductance than heterohexamers. Detected in a channel complex that contains LRRC8A, LRRC8C and LRRC8E. In vivo, the subunit composition may depend primarily on expression levels, and heterooligomeric channels containing various proportions of the different LRRC8 proteins may coexist. Interact with GRB2. Interacts with NOX4; this interaction prevents the ubiquitin-mediated degradation of LRRC8A. Post-translationally, N-glycosylated.

It localises to the cell membrane. The protein resides in the lysosome membrane. The catalysed reaction is chloride(in) = chloride(out). It carries out the reaction iodide(out) = iodide(in). It catalyses the reaction taurine(out) = taurine(in). The enzyme catalyses L-aspartate(out) = L-aspartate(in). The catalysed reaction is L-glutamate(out) = L-glutamate(in). It carries out the reaction myo-inositol(out) = myo-inositol(in). It catalyses the reaction 2',3'-cGAMP(out) = 2',3'-cGAMP(in). Inhibited by (4-[(2-butyl-6,7-dichloro-2-cyclopentyl-2,3-dihydro-1-oxo-1H-inden-5-yl)oxy]butanoic acid), which plugs the channel like a cork in a bottle by binding in the extracellular selectivity filter and sterically occluding ion conduction. Lipids may block conduction in closed heterohexameric channels. Its function is as follows. Essential component of the volume-regulated anion channel (VRAC, also named VSOAC channel), an anion channel required to maintain a constant cell volume in response to extracellular or intracellular osmotic changes. The VRAC channel conducts iodide better than chloride and can also conduct organic osmolytes like taurine. Mediates efflux of amino acids, such as aspartate and glutamate, in response to osmotic stress. In complex with LRRC8C or LRRC8E, acts as a transporter of immunoreactive cyclic dinucleotide GMP-AMP (2'-3'-cGAMP), an immune messenger produced in response to DNA virus in the cytosol: mediates both import and export of 2'-3'-cGAMP, thereby promoting transfer of 2'-3'-cGAMP to bystander cells. In contrast, complexes containing LRRC8D inhibit transport of 2'-3'-cGAMP. Required for in vivo channel activity, together with at least one other family member (LRRC8B, LRRC8C, LRRC8D or LRRC8E); channel characteristics depend on the precise subunit composition. Can form functional channels by itself (in vitro). Involved in B-cell development: required for the pro-B cell to pre-B cell transition. Also required for T-cell development. Required for myoblast differentiation: VRAC activity promotes membrane hyperpolarization and regulates insulin-stimulated glucose metabolism and oxygen consumption. Also acts as a regulator of glucose-sensing in pancreatic beta cells: VRAC currents, generated in response to hypotonicity- or glucose-induced beta cell swelling, depolarize cells, thereby causing electrical excitation, leading to increase glucose sensitivity and insulin secretion. Also plays a role in lysosome homeostasis by forming functional lysosomal VRAC channels in response to low cytoplasmic ionic strength condition: lysosomal VRAC channels are necessary for the formation of large lysosome-derived vacuoles, which store and then expel excess water to maintain cytosolic water homeostasis. Acts as a key factor in NLRP3 inflammasome activation by modulating itaconate efflux and mitochondria function. In Rattus norvegicus (Rat), this protein is Volume-regulated anion channel subunit LRRC8A.